Reading from the N-terminus, the 626-residue chain is Threonine--tRNA ligase (626 aa).

Residues 1–144 form an editing domain region; that stretch reads MRMLLIHADY…LSRTIVPEEG (144 aa). Residues 207–506 are catalytic; it reads PHVRLMLEHE…QAQGKKPMFP (300 aa). Zn(2+) contacts are provided by cysteine 299, histidine 351, and histidine 475.

Belongs to the class-II aminoacyl-tRNA synthetase family. As to quaternary structure, homodimer. Requires Zn(2+) as cofactor.

The protein resides in the cytoplasm. The catalysed reaction is tRNA(Thr) + L-threonine + ATP = L-threonyl-tRNA(Thr) + AMP + diphosphate + H(+). In terms of biological role, catalyzes the attachment of threonine to tRNA(Thr) in a two-step reaction: L-threonine is first activated by ATP to form Thr-AMP and then transferred to the acceptor end of tRNA(Thr). Also edits incorrectly charged L-seryl-tRNA(Thr). The chain is Threonine--tRNA ligase from Thermococcus gammatolerans (strain DSM 15229 / JCM 11827 / EJ3).